A 260-amino-acid polypeptide reads, in one-letter code: Flap endonuclease Xni (260 aa).

Asp-112 contributes to the Mg(2+) binding site. One can recognise a 5'-3' exonuclease domain in the interval 168–258 (LQPSQLVDFW…FNLKDLRYTP (91 aa)). Leu-179, Val-190, and Ile-193 together coordinate K(+). Positions 192–197 (GIGEKT) are interaction with DNA.

Belongs to the Xni family. The cofactor is Mg(2+). K(+) serves as cofactor.

Its function is as follows. Has flap endonuclease activity. During DNA replication, flap endonucleases cleave the 5'-overhanging flap structure that is generated by displacement synthesis when DNA polymerase encounters the 5'-end of a downstream Okazaki fragment. This is Flap endonuclease Xni from Tolumonas auensis (strain DSM 9187 / NBRC 110442 / TA 4).